Consider the following 1203-residue polypeptide: Kinesin-like protein KIN-14Q (1203 aa).

Residues 1–28 (MEDCCDPLLATDASPRPESFSRSEKDIA) are disordered. The span at 19 to 28 (SFSRSEKDIA) shows a compositional bias: basic and acidic residues. Residues 336–395 (ENLVCRAEEEAEGMRSDCEQQRKEMEDMKRMVEELKLENQQKTRECEEALNSLSEIQNEL) are a coiled coil. A Kinesin motor domain is found at 499-825 (NIRVFCRCRP…LNFASRVRGI (327 aa)). 582-589 (GQTGTGKT) lines the ATP pocket. Residues 846-901 (VEKWKQDMKGKDEQIRKMEETMYGLEAKIKERDTKNKTLQDKVKELESQLLVERKL) adopt a coiled-coil conformation. A disordered region spans residues 907–931 (DTKIAEQQTKQQTEDENNTSKRPPL).

The protein belongs to the TRAFAC class myosin-kinesin ATPase superfamily. Kinesin family. KIN-14 subfamily.

The protein is Kinesin-like protein KIN-14Q of Arabidopsis thaliana (Mouse-ear cress).